Reading from the N-terminus, the 433-residue chain is MTTDSDTALLFDPALALPSGPAPRRTSVGVRVGSGPGSVQVGGGAPIVVQSMTNTDTADIDSTVEQVAALARAGSELVRITVDRDPAAAAVPYIREKLDKMGCLVPLVGDFHYIGHRLLTEYPACAEALAKYRINPGNVGFREKRDRQFSTIVEIAAKYDKAVRIGANWGSLDQELLTSLMDKNAGSAAPLSVGAVTREAMVQSALLSAARAEELGLKRDRIILSAKVSSVQDLITVYRMVAARSDYALHLGLTEAGMGSKGIVASSAALGILLQEGIGDTIRVSLTPQPGGDRTLEVTVAQEILQTMGFRTFVPLVAACPGCGRTTSTVFQELARDIQTYIREEMPLWRSRYPGVESLNVAVMGCIVNGPGESKHADIGISLPGTGETPSAPVFIDGEKTTTLRGEGIAAEFKTIVQDYIERRFGGAKSAAE.

4 residues coordinate [4Fe-4S] cluster: C320, C323, C366, and E373.

It belongs to the IspG family. [4Fe-4S] cluster serves as cofactor.

It carries out the reaction (2E)-4-hydroxy-3-methylbut-2-enyl diphosphate + oxidized [flavodoxin] + H2O + 2 H(+) = 2-C-methyl-D-erythritol 2,4-cyclic diphosphate + reduced [flavodoxin]. The protein operates within isoprenoid biosynthesis; isopentenyl diphosphate biosynthesis via DXP pathway; isopentenyl diphosphate from 1-deoxy-D-xylulose 5-phosphate: step 5/6. In terms of biological role, converts 2C-methyl-D-erythritol 2,4-cyclodiphosphate (ME-2,4cPP) into 1-hydroxy-2-methyl-2-(E)-butenyl 4-diphosphate. This Beijerinckia indica subsp. indica (strain ATCC 9039 / DSM 1715 / NCIMB 8712) protein is 4-hydroxy-3-methylbut-2-en-1-yl diphosphate synthase (flavodoxin).